We begin with the raw amino-acid sequence, 1589 residues long: Centrosomal protein of 170 kDa protein B (1589 aa).

One can recognise an FHA domain in the interval 23–73; sequence IFVGREECELMLQSRSVDKQHAVINYDQDRDEHWVKDLGSLNGTFVNDMRI. 4 disordered regions span residues 130 to 261, 287 to 309, 325 to 388, and 409 to 583; these read RSEA…GAAP, ITKFSLRQRRPPGKEATPGEMVS, LLHR…RLQR, and FDED…EVEE. Basic and acidic residues-rich tracts occupy residues 147–156 and 243–253; these read RPEKGDRRPG and PAHEMPTKDAE. Residues 330 to 344 are compositionally biased toward basic and acidic residues; that stretch reads GPGDDRHSTKSDLPV. Phosphoserine occurs at positions 360 and 421. Basic and acidic residues-rich tracts occupy residues 430 to 446 and 467 to 476; these read PKADKRRGPTPADRDRP and LKREKTEERL. Low complexity predominate over residues 478 to 489; the sequence is SPSPASRTPARP. 2 positions are modified to phosphoserine: Ser480 and Ser492. The segment covering 520–530 has biased composition (pro residues); sequence EKVPPVLPAPL. The residue at position 536 (Ser536) is a Phosphoserine. Pro residues predominate over residues 538-548; it reads VGPPTPPPAPT. At Thr542 the chain carries Phosphothreonine. Phosphoserine is present on residues Ser597, Ser619, Ser655, Ser711, Ser721, Ser746, Ser748, Ser751, Ser753, Ser772, Ser829, Ser853, Ser954, Ser972, Ser986, and Ser988. Disordered regions lie at residues 598–895, 934–1316, 1350–1374, and 1532–1552; these read PELS…LQDL, DAEC…PYGF, DGDTLGSSEPAHSASLSNMPSTPAS, and AQPGLGKGRVAAQSPPSPASA. Over residues 711–722 the composition is skewed to low complexity; the sequence is SPAGPESSRRSG. The span at 957 to 972 shows a compositional bias: polar residues; that stretch reads DTASTVSLRSGKSGPS. The span at 1029 to 1038 shows a compositional bias: basic residues; that stretch reads SAIRRGHRPR. 3 positions are modified to phosphoserine: Ser1135, Ser1179, and Ser1199. Residues 1221–1230 show a composition bias toward polar residues; it reads AANTATTTGP. Residues 1286 to 1301 are compositionally biased toward low complexity; it reads PRAGSSSRARSRAPGP. The residue at position 1304 (Thr1304) is a Phosphothreonine. Phosphoserine is present on residues Ser1356 and Ser1362. Positions 1363–1374 are enriched in polar residues; sequence ASLSNMPSTPAS. Positions 1542–1552 are enriched in low complexity; sequence AAQSPPSPASA. Phosphoserine occurs at positions 1545 and 1548.

It belongs to the CEP170 family.

It localises to the cytoplasm. The protein localises to the cytoskeleton. Functionally, plays a role in microtubule organization. This Homo sapiens (Human) protein is Centrosomal protein of 170 kDa protein B (CEP170B).